Here is a 174-residue protein sequence, read N- to C-terminus: C-type lectin domain family 2 member A (174 aa).

Topologically, residues 1-27 are cytoplasmic; sequence MINPELRDGRADGFIHRIVPKLIQNWK. The chain crosses the membrane as a helical; Signal-anchor for type II membrane protein span at residues 28–48; the sequence is IGLMCFLSIIITTVCIIMIAT. Topologically, residues 49 to 174 are extracellular; that stretch reads WSKHAKPVAC…WICSKPKYFL (126 aa). Cysteines 58 and 69 form a disulfide. The C-type lectin domain occupies 65 to 174; that stretch reads VRDKCFYFSD…WICSKPKYFL (110 aa). Asn78, Asn130, and Asn143 each carry an N-linked (GlcNAc...) asparagine glycan. The cysteines at positions 86 and 167 are disulfide-linked.

Homodimer; non-disulfide-linked. Interacts with KLRB1. Interacts with KLRF2. In terms of processing, N-glycosylated. As to expression, mainly expressed in skin. Also expressed in keratinocytes, spleen, thymus, small intestine, peripheral blood monocytes, bone marrow, ovary, testis and skin. High expression in CD8(+), B-lymphocytes and naive CD4(+) T-cells. Restricted mostly to proliferating lymphocytes. Not detected in myeloid leukocytes or natural killer (NK) cells.

Its subcellular location is the cell membrane. Its function is as follows. Membrane-bound protein expressed mainly on keratinocytes which acts as a ligand to stimulate the activating receptor NKp65/KLRF2, expressed on the surface of natural killer (NK) cells. Facilitates thereby dedicated immune recognition of keratinocytes leading to natural killer cell mediated cytotoxicity. Also plays a role in modulating the extent of T-cell expansion. The protein is C-type lectin domain family 2 member A (CLEC2A) of Homo sapiens (Human).